A 1174-amino-acid chain; its full sequence is Nucleolar complex protein 1 (1174 aa).

Disordered stretches follow at residues 1–20 (MPAA…NKKI), 29–237 (VVKQ…EESQ), 715–742 (YEDV…VKSS), 893–922 (AQNK…LKEG), 944–1085 (GVDE…GGRS), and 1116–1174 (VKGQ…KRKH). Residues 33–63 (NKKEHPQRPKFEGKEQVKKPQKIKFGEDGKA) show a composition bias toward basic and acidic residues. The span at 95 to 104 (ASKSFNQNHK) shows a compositional bias: polar residues. Composition is skewed to basic and acidic residues over residues 113 to 122 (KFGEDREAVH) and 176 to 200 (KFGD…EDGA). Composition is skewed to acidic residues over residues 207 to 216 (SDGDSDEELG) and 715 to 724 (YEDVKDEADD). Basic and acidic residues-rich tracts occupy residues 725–739 (TKDS…DNDV) and 897–906 (KQKEIKKDAA). 4 stretches are compositionally biased toward acidic residues: residues 907–916 (EEGDDGEAGE), 945–954 (VDEEQDEEEL), 981–1038 (AEDE…DEGS), and 1048–1065 (DSSD…DDED). Over residues 1127–1143 (NKDKSSDKQLKWEENRR) the composition is skewed to basic and acidic residues. Positions 1156–1166 (GKPAAKGGRPQ) are enriched in low complexity.

The protein belongs to the CBF/MAK21 family.

The protein localises to the nucleus. It localises to the nucleolus. Functionally, involved in rRNA processing and ribosome maturation. May also act as a transcription factor. This chain is Nucleolar complex protein 1, found in Drosophila melanogaster (Fruit fly).